The sequence spans 1163 residues: DNA-directed RNA polymerase subunit beta' (1163 aa).

C59, C61, C74, and C77 together coordinate Zn(2+). 3 residues coordinate Mg(2+): D449, D451, and D453. Zn(2+) contacts are provided by C794, C868, C875, and C878.

It belongs to the RNA polymerase beta' chain family. The RNAP catalytic core consists of 2 alpha, 1 beta, 1 beta' and 1 omega subunit. When a sigma factor is associated with the core the holoenzyme is formed, which can initiate transcription. Mg(2+) is required as a cofactor. It depends on Zn(2+) as a cofactor.

It catalyses the reaction RNA(n) + a ribonucleoside 5'-triphosphate = RNA(n+1) + diphosphate. DNA-dependent RNA polymerase catalyzes the transcription of DNA into RNA using the four ribonucleoside triphosphates as substrates. This Caldicellulosiruptor saccharolyticus (strain ATCC 43494 / DSM 8903 / Tp8T 6331) protein is DNA-directed RNA polymerase subunit beta'.